We begin with the raw amino-acid sequence, 141 residues long: Small ribosomal subunit protein bS6 (141 aa).

A disordered region spans residues 97–141 (TGQSEMLKAEENRSERRERRDRPEHADSADGDDSDNSDASDNADE). Positions 103 to 124 (LKAEENRSERRERRDRPEHADS) are enriched in basic and acidic residues. Positions 125-141 (ADGDDSDNSDASDNADE) are enriched in acidic residues.

Belongs to the bacterial ribosomal protein bS6 family.

In terms of biological role, binds together with bS18 to 16S ribosomal RNA. This chain is Small ribosomal subunit protein bS6, found in Pseudomonas fluorescens (strain ATCC BAA-477 / NRRL B-23932 / Pf-5).